The chain runs to 478 residues: Cytochrome c-552 (478 aa).

The N-terminal stretch at 1–27 (MKKQWTRRSAAAIAMVTTLLLSSHSFA) is a signal peptide. His-91 contributes to the heme c binding site. Residues Cys-119, Cys-122, and Lys-123 each contribute to the heme site. Residues Cys-157, Cys-160, His-161, Cys-206, Cys-209, and His-210 each coordinate heme c. Residues Glu-212, Tyr-213, Lys-258, and Gln-260 each contribute to the Ca(2+) site. Residue Tyr-213 coordinates substrate. His-261 serves as a coordination point for substrate. Heme c contacts are provided by His-272, Cys-279, Cys-282, His-283, His-298, Cys-311, Cys-314, His-315, and His-390.

This sequence belongs to the cytochrome c-552 family. Ca(2+) is required as a cofactor. Heme c serves as cofactor.

The protein localises to the periplasm. It catalyses the reaction 6 Fe(III)-[cytochrome c] + NH4(+) + 2 H2O = 6 Fe(II)-[cytochrome c] + nitrite + 8 H(+). It participates in nitrogen metabolism; nitrate reduction (assimilation). Catalyzes the reduction of nitrite to ammonia, consuming six electrons in the process. This is Cytochrome c-552 from Aliivibrio fischeri (strain ATCC 700601 / ES114) (Vibrio fischeri).